The sequence spans 396 residues: Phosphoglycerate kinase (396 aa).

Residues 22–24, arginine 37, 60–63, arginine 118, and arginine 151 each bind substrate; these read DLN and HFGR. Residues lysine 201, glutamate 323, and 353–356 each bind ATP; that span reads GGDT.

Belongs to the phosphoglycerate kinase family. As to quaternary structure, monomer.

It localises to the cytoplasm. The enzyme catalyses (2R)-3-phosphoglycerate + ATP = (2R)-3-phospho-glyceroyl phosphate + ADP. Its pathway is carbohydrate degradation; glycolysis; pyruvate from D-glyceraldehyde 3-phosphate: step 2/5. This Xanthobacter autotrophicus (strain ATCC BAA-1158 / Py2) protein is Phosphoglycerate kinase.